A 304-amino-acid chain; its full sequence is Probable porphobilinogen deaminase (304 aa).

Cys-240 carries the S-(dipyrrolylmethanemethyl)cysteine modification.

This sequence belongs to the HMBS family. It depends on dipyrromethane as a cofactor.

It carries out the reaction 4 porphobilinogen + H2O = hydroxymethylbilane + 4 NH4(+). The protein operates within porphyrin-containing compound metabolism; protoporphyrin-IX biosynthesis; coproporphyrinogen-III from 5-aminolevulinate: step 2/4. Its function is as follows. Tetrapolymerization of the monopyrrole PBG into the hydroxymethylbilane pre-uroporphyrinogen in several discrete steps. This Ignicoccus hospitalis (strain KIN4/I / DSM 18386 / JCM 14125) protein is Probable porphobilinogen deaminase.